Here is an 878-residue protein sequence, read N- to C-terminus: Alanine--tRNA ligase (878 aa).

Residues His-565, His-569, Cys-667, and His-671 each coordinate Zn(2+).

The protein belongs to the class-II aminoacyl-tRNA synthetase family. Requires Zn(2+) as cofactor.

The protein localises to the cytoplasm. The enzyme catalyses tRNA(Ala) + L-alanine + ATP = L-alanyl-tRNA(Ala) + AMP + diphosphate. In terms of biological role, catalyzes the attachment of alanine to tRNA(Ala) in a two-step reaction: alanine is first activated by ATP to form Ala-AMP and then transferred to the acceptor end of tRNA(Ala). Also edits incorrectly charged Ser-tRNA(Ala) and Gly-tRNA(Ala) via its editing domain. The sequence is that of Alanine--tRNA ligase from Desulforamulus reducens (strain ATCC BAA-1160 / DSM 100696 / MI-1) (Desulfotomaculum reducens).